We begin with the raw amino-acid sequence, 189 residues long: MISMNRLSILLFVFAFGLTMMSNTALSYKHSVWIRNFLHEKNDLIIHCKSTNHDMVYHRLHPTGSYHLLVDDDSDYFWCHLWQGPNFKHHQVFGVNHGDVWEAREDGIYFSQIKYARDLRQHVFMYGWNVPLTLSRASSLGLCCVSLSLLLSSLVLFYFYLVLVLKFIFFIMNFKNLIFICVGIFLFSL.

A signal peptide spans 1 to 25 (MISMNRLSILLFVFAFGLTMMSNTA).

It belongs to the plant self-incompatibility (S1) protein family.

It localises to the secreted. The sequence is that of S-protein homolog 26 from Arabidopsis thaliana (Mouse-ear cress).